The primary structure comprises 268 residues: Undecaprenyl-diphosphatase (268 aa).

7 helical membrane passes run 5-25 (SIIS…IPVS), 43-63 (GNTF…LVYF), 84-104 (FSVL…HGFI), 106-126 (AVLF…GVIL), 184-204 (AAEF…TLDL), 213-233 (FDDI…GIVV), and 248-268 (PFAI…WLVG).

The protein belongs to the UppP family.

The protein resides in the cell inner membrane. The catalysed reaction is di-trans,octa-cis-undecaprenyl diphosphate + H2O = di-trans,octa-cis-undecaprenyl phosphate + phosphate + H(+). Functionally, catalyzes the dephosphorylation of undecaprenyl diphosphate (UPP). Confers resistance to bacitracin. The polypeptide is Undecaprenyl-diphosphatase (Sinorhizobium fredii (strain NBRC 101917 / NGR234)).